The chain runs to 427 residues: Lactadherin (427 aa).

The N-terminal stretch at 1 to 22 (MQFSRVLAALCGVLLCASGLFA) is a signal peptide. 2 EGF-like domains span residues 24–61 (SGDFCDSSLCLNGGTCLMGQDNDIYCLCPEGFTGLVCN) and 64–108 (EKGP…IHCE). Disulfide bonds link Cys28–Cys39, Cys33–Cys49, and Cys51–Cys60. Asn61 is a glycosylation site (N-linked (GlcNAc...) asparagine). Disulfide bonds link Cys68-Cys79, Cys73-Cys96, Cys98-Cys107, Cys111-Cys267, Cys254-Cys258, and Cys272-Cys427. The Cell attachment site motif lies at 87 to 89 (RGD). F5/8 type C domains are found at residues 111–267 (CSTK…LLGC) and 272–427 (CSEP…LLGC). N-linked (GlcNAc...) asparagine glycosylation occurs at Asn230. Asn280 and Asn390 each carry an N-linked (GlcNAc...) asparagine glycan.

As to expression, spleen, lung, heart, brain and muscle.

It localises to the membrane. The protein resides in the secreted. It is found in the cytoplasmic vesicle. The protein localises to the secretory vesicle. Its subcellular location is the acrosome membrane. In terms of biological role, contributes to phagocytic removal of apoptotic cells in many tissues. Plays an important role in the maintenance of intestinal epithelial homeostasis and the promotion of mucosal healing. Promotes VEGF-dependent neovascularization. Specific ligand for the alpha-v/beta-3 and alpha-v/beta-5 receptors. Also binds to phosphatidylserine-enriched cell surfaces in a receptor-independent manner. Zona pellucida-binding protein which may play a role in gamete interaction. Appears to participate in the O-acetylation of GD3 ganglioside sialic acid. The chain is Lactadherin (Mfge8) from Rattus norvegicus (Rat).